The primary structure comprises 434 residues: Adenylosuccinate synthetase (434 aa).

GTP-binding positions include 25-31 and 53-55; these read GDEGKGK and GHT. Asp-26 (proton acceptor) is an active-site residue. Asp-26 and Gly-53 together coordinate Mg(2+). Residues 26–29, 51–54, Thr-142, Arg-156, Asn-233, Thr-248, and Arg-312 each bind IMP; these read DEGK and NAGH. The active-site Proton donor is the His-54. Substrate is bound at residue 308–314; that stretch reads VTTGRKR. Residues Arg-314, 340–342, and 422–424 each bind GTP; these read KLD and GVG.

The protein belongs to the adenylosuccinate synthetase family. In terms of assembly, homodimer. The cofactor is Mg(2+).

It localises to the cytoplasm. It carries out the reaction IMP + L-aspartate + GTP = N(6)-(1,2-dicarboxyethyl)-AMP + GDP + phosphate + 2 H(+). Its pathway is purine metabolism; AMP biosynthesis via de novo pathway; AMP from IMP: step 1/2. With respect to regulation, competitively Inhibited by GMP. Allosterically inhibited by AMP. Plays an important role in the de novo pathway and in the salvage pathway of purine nucleotide biosynthesis. Catalyzes the first committed step in the biosynthesis of AMP from IMP. The protein is Adenylosuccinate synthetase (ade2) of Schizosaccharomyces pombe (strain 972 / ATCC 24843) (Fission yeast).